The chain runs to 122 residues: MARIAGVNIPTAKRVVIALTYIHGIGTKFAQEIIEKVGIPAERRVHQLTDAEVLQIRETIDRDYQVEGDLRRETSMNIKRLMDLGCYRGLRHRRGLPVRGQRTHTNARTRKGPAKAIAGKKK.

The interval 99-122 (RGQRTHTNARTRKGPAKAIAGKKK) is disordered.

Belongs to the universal ribosomal protein uS13 family. Part of the 30S ribosomal subunit. Forms a loose heterodimer with protein S19. Forms two bridges to the 50S subunit in the 70S ribosome.

Functionally, located at the top of the head of the 30S subunit, it contacts several helices of the 16S rRNA. In the 70S ribosome it contacts the 23S rRNA (bridge B1a) and protein L5 of the 50S subunit (bridge B1b), connecting the 2 subunits; these bridges are implicated in subunit movement. Contacts the tRNAs in the A and P-sites. This Rhizobium meliloti (strain 1021) (Ensifer meliloti) protein is Small ribosomal subunit protein uS13.